We begin with the raw amino-acid sequence, 455 residues long: SH3 domain-binding protein 5 (455 aa).

Residues 1 to 12 (MDAALKRSRSEE) show a composition bias toward basic and acidic residues. Positions 1 to 63 (MDAALKRSRS…QSTDDINRRE (63 aa)) are disordered. Over residues 22–41 (DEEEEEEEGMEQGLEEEEEV) the composition is skewed to acidic residues. The segment at 31–265 (MEQGLEEEEE…EIHERRRSSA (235 aa)) is sufficient for interaction with RAB11A and for guanine nucleotide exchange activity. Residues 42 to 51 (DPRIQGELEK) are compositionally biased toward basic and acidic residues. Coiled-coil stretches lie at residues 44–90 (RIQG…LVKK), 97–145 (DSKP…RLLE), 154–200 (AWQE…LEKK), and 211–255 (YFEL…MISD). Disordered regions lie at residues 259-293 (ERRRSSAMGPRGCGVGAEGSSTSVEDLPGSKPEPD) and 306-345 (SCSNFVSEDDSETQSVSSFSSGPTSPSEMPDQFPAVVRPG). Residues 306-317 (SCSNFVSEDDSE) are compositionally biased toward acidic residues. The segment covering 320-332 (SVSSFSSGPTSPS) has biased composition (low complexity). Phosphoserine; by MAPK12 and MAPK9 is present on serine 351. Residues 369–435 (SECSGASSPE…ALENRMKQLS (67 aa)) are disordered. Phosphoserine occurs at positions 375 and 376. Over residues 380 to 396 (EVERGDRAEGAENKTSD) the composition is skewed to basic and acidic residues. The span at 403–421 (GLSSSSGSGGSSKSQSSTS) shows a compositional bias: low complexity. 2 positions are modified to phosphoserine: serine 418 and serine 421.

Belongs to the SH3BP5 family. In terms of assembly, interacts with BTK. Interacts with all isoforms of MAPK8, MAPK9, MAPK10 and MAPK12. Interacts with GDP-bound and nucleotide-free forms of RAB11A. As to expression, highly expressed in testis and ovaries. It is also expressed in a variety of tissues including spleen, lymph node, thymus, bone marrow, fetal liver, colon, small intestine and prostate.

It localises to the cytoplasmic vesicle membrane. Its subcellular location is the mitochondrion. Functionally, functions as a guanine nucleotide exchange factor (GEF) with specificity for RAB11A and RAB25. Inhibits the auto- and transphosphorylation activity of BTK. Plays a negative regulatory role in BTK-related cytoplasmic signaling in B-cells. May be involved in BCR-induced apoptotic cell death. In Homo sapiens (Human), this protein is SH3 domain-binding protein 5 (SH3BP5).